Consider the following 364-residue polypeptide: Putative glutamate--cysteine ligase 2-2 (364 aa).

This sequence belongs to the glutamate--cysteine ligase type 2 family. YbdK subfamily.

The catalysed reaction is L-cysteine + L-glutamate + ATP = gamma-L-glutamyl-L-cysteine + ADP + phosphate + H(+). Functionally, ATP-dependent carboxylate-amine ligase which exhibits weak glutamate--cysteine ligase activity. This is Putative glutamate--cysteine ligase 2-2 from Mycobacterium sp. (strain JLS).